The primary structure comprises 390 residues: Cystathionine beta-lyase MetC (390 aa).

At Lys200 the chain carries N6-(pyridoxal phosphate)lysine.

It belongs to the trans-sulfuration enzymes family. In terms of assembly, homotetramer. It depends on pyridoxal 5'-phosphate as a cofactor.

It localises to the cytoplasm. It carries out the reaction L,L-cystathionine + H2O = L-homocysteine + pyruvate + NH4(+). It catalyses the reaction an S-substituted L-cysteine + H2O = a thiol + pyruvate + NH4(+). Its pathway is amino-acid biosynthesis; L-methionine biosynthesis via de novo pathway; L-homocysteine from L-cystathionine: step 1/1. Its function is as follows. Catalyzes the transformation of cystathionine into homocysteine. Also exhibits cysteine desulfhydrase activity in vitro, producing sulfide from cysteine. This is Cystathionine beta-lyase MetC (metC) from Bacillus subtilis (strain 168).